The following is a 126-amino-acid chain: Small ribosomal subunit protein eS6 (126 aa).

This sequence belongs to the eukaryotic ribosomal protein eS6 family.

This Nanoarchaeum equitans (strain Kin4-M) protein is Small ribosomal subunit protein eS6.